A 78-amino-acid polypeptide reads, in one-letter code: UPF0401 protein YubL (78 aa).

Belongs to the UPF0401 family.

The chain is UPF0401 protein YubL (yubL) from Salmonella typhi.